A 128-amino-acid chain; its full sequence is Ribosome-binding factor A (128 aa).

The protein belongs to the RbfA family. As to quaternary structure, monomer. Binds 30S ribosomal subunits, but not 50S ribosomal subunits or 70S ribosomes.

The protein localises to the cytoplasm. Its function is as follows. One of several proteins that assist in the late maturation steps of the functional core of the 30S ribosomal subunit. Associates with free 30S ribosomal subunits (but not with 30S subunits that are part of 70S ribosomes or polysomes). Required for efficient processing of 16S rRNA. May interact with the 5'-terminal helix region of 16S rRNA. This is Ribosome-binding factor A from Saccharophagus degradans (strain 2-40 / ATCC 43961 / DSM 17024).